We begin with the raw amino-acid sequence, 150 residues long: CCAAT/enhancer-binding protein gamma (150 aa).

K3 participates in a covalent cross-link: Glycyl lysine isopeptide (Lys-Gly) (interchain with G-Cter in SUMO2). Residues 27-94 (GLQQVPQLVP…QKAQDTLQRV (68 aa)) form a disordered region. Over residues 28–37 (LQQVPQLVPA) the composition is skewed to low complexity. Residues 56-72 (SPMDRNSDEYRQRRERN) are compositionally biased toward basic and acidic residues. Residues 62–125 (SDEYRQRRER…SVLKDLFLEH (64 aa)) enclose the bZIP domain. The basic motif stretch occupies residues 66-93 (RQRRERNNMAVKKSRLKSKQKAQDTLQR). Residues 97–118 (LKEENERLEAKIKLLTKELSVL) are leucine-zipper.

Belongs to the bZIP family. C/EBP subfamily. In terms of assembly, binds DNA as a dimer and can form stable heterodimers with CEBPA and CEBPB. Interacts with ZNF638; this interaction increases transcriptional activation.

Its subcellular location is the nucleus. Transcription factor that binds to the promoter and the enhancer regions of target genes. Binds to the enhancer element PRE-I (positive regulatory element-I) of the IL-4 gene. Binds to the promoter and the enhancer of the immunoglobulin heavy chain. Binds to GPE1, a cis-acting element in the G-CSF gene promoter. The chain is CCAAT/enhancer-binding protein gamma (CEBPG) from Homo sapiens (Human).